An 847-amino-acid polypeptide reads, in one-letter code: METRYNPHAIEPRRQKQWEEAPHLAMDGRPKFYALSMFPYPSGALHMGHVRNYSITDVISRYKRMRGFNVLHPIGWDAFGLPAENAAIDRGIHPAQWTEQNIAQMREQLKRLGFAYAWEREVATCSPAYYRWTQKLFLEFWKAGLAYRKAGVVNWDPVDQTVLANEQVDAEGRSWRSGALVEKRPLEQWYLKITDYAEELLQALGTLGDWPERVRVMQENWIGKSVGAELCFPINGEPEGIRVFTTRPDTVYGVTYLVLAPEHPLVERITAPERREAVRAFVAQVQSESEIERVSEDRPKQGVSTGAVALNPFTGQAVPVWIADYVLFEYGTGAVMGVPGHDERDFVFASQYELPIRLVVQAPDGSLTEPLRAAYTEVGVLVNSGPFNGLDSPTGKLKIVEYAEQQGWGKGRVQYRLRDWLISRQRYWGCPIPMVYCPECGVVPVPDEQLPVALPGDVEFSGRGPSPLAKLEGWICVDCPQCGAPARRETDTMDTFIDSSWYFLRFADARNGAEPFSREAVDYWLPVDQYVGGIEHAILHLLYSRFFTKVLRDRGLLSFDEPFKRLLTQGMVLSNAFVDPATKKYYPPDQVEERGGAFFARPDGTPLVCAMEKMSKSKYNGIDPLTVRSEYGADTARLFVLFKAPPEKELEWSDADVRGQYSFLGRVWRTVYEFVSGEKPDRPVGEAQERDLRREVHRAIQQVGGDIEQYKFNTAIAALMKLNNAMADYPSGQSPAYKEGVYVIVKLLAPFAPHIGAELWQALGEAGDIHTSDWPALDESALVEETIVLVIQVNGKKRDDIQVPAAASEGELQELALASEAVRRHTDGKAIKKVIVVPGRLINLVVG.

The 'HIGH' region motif lies at 39 to 49; the sequence is PYPSGALHMGH. The 'KMSKS' region signature appears at 613-617; it reads KMSKS. K616 contributes to the ATP binding site.

This sequence belongs to the class-I aminoacyl-tRNA synthetase family.

It localises to the cytoplasm. It catalyses the reaction tRNA(Leu) + L-leucine + ATP = L-leucyl-tRNA(Leu) + AMP + diphosphate. This Gloeobacter violaceus (strain ATCC 29082 / PCC 7421) protein is Leucine--tRNA ligase.